Consider the following 1101-residue polypeptide: MDRAPTEQNVKLSAEVEPFIPQKKSPDTFMIPMALPNDNGSVSGVEPTPIPSYLITCYPFVQENQSNRQFPLYNNDIRWQQPNPNPTGPYFAYPIISAQPPVSTEYTYYQLMPAPCAQVMGFYHPFPTPYSNTFQAANTVNAITTECTERPSQLGQVFPLSSHRSRNSNRGSVVPKQQLLQQHIKSKRPLVKNVATQKETNAAGPDSRSKIVLLVDASQQTDFPSDIANKSLSETTATMLWKSKGRRRRASHPTAESSSEQGASEADIDSDSGYCSPKHSNNQPAAGALRNPDSGTMNHVESSMCAGGVNWSNVTCQATQKKPWMEKNQTFSRGGRQTEQRNNSQVGFRCRGHSTSSERRQNLQKRPDNKHLSSSQSHRSDPNSESLYFEDEDGFQELNENGNAKDENIQQKLSSKVLDDLPENSPINIVQTPIPITTSVPKRAKSQKKKALAAALATAQEYSEISMEQKKLQEALSKAAGKKNKTPVQLDLGDMLAALEKQQQAMKARQITNTRPLSYTVVTAASFHTKDSTNRKPLTKSQPCLTSFNSVDIASSKAKKGKEKEIAKLKRPTALKKVILKEREEKKGRLTVDHNLLGSEEPTEMHLDFIDDLPQEIVSQEDTGLSMPSDTSLSPASQNSPYCMTPVSQGSPASSGIGSPMASSTITKIHSKRFREYCNQVLCKEIDECVTLLLQELVSFQERIYQKDPVRAKARRRLVMGLREVTKHMKLNKIKCVIISPNCEKIQSKGGLDEALYNVIAMAREQEIPFVFALGRKALGRCVNKLVPVSVVGIFNYFGAESLFNKLVELTEEARKAYKDMVAAMEQEQAEEALKNVKKVPHHMGHSRNPSAASAISFCSVISEPISEVNEKEYETNWRNMVETSDGLEASENEKEVSCKHSTSEKPSKLPFDTPPIGKQPSLVATGSTTSATSAGKSTASDKEEVKPDDLEWASQQSTETGSLDGSCRDLLNSSITSTTSTLVPGMLEEEEDEDEEEEEDYTHEPISVEVQLNSRIESWVSETQRTMETLQLGKTLNGSEEDNVEQSGEEEAEAPEVLEPGMDSEAWTADQQASPGQQKSSNCSSLNKEHSDSNYTTQTT.

Disordered regions lie at residues 154-206, 240-295, 320-387, 884-1010, and 1030-1101; these read LGQV…AGPD, LWKS…PDSG, QKKP…SESL, TSDG…ISVE, and TLQL…TQTT. Over residues 255 to 265 the composition is skewed to low complexity; it reads AESSSEQGASE. S276 is subject to Phosphoserine. Polar residues predominate over residues 327 to 346; the sequence is KNQTFSRGGRQTEQRNNSQV. 2 stretches are compositionally biased toward basic and acidic residues: residues 356–371 and 892–908; these read SSER…DNKH and ENEK…EKPS. Low complexity predominate over residues 925 to 939; that stretch reads ATGSTTSATSAGKST. Positions 940–950 are enriched in basic and acidic residues; that stretch reads ASDKEEVKPDD. The span at 954-964 shows a compositional bias: polar residues; sequence ASQQSTETGSL. Over residues 988-1002 the composition is skewed to acidic residues; the sequence is LEEEEDEDEEEEEDY. The span at 1030–1039 shows a compositional bias: polar residues; it reads TLQLGKTLNG. Positions 1040–1057 are enriched in acidic residues; it reads SEEDNVEQSGEEEAEAPE. The segment covering 1070–1087 has biased composition (polar residues); the sequence is ADQQASPGQQKSSNCSSL.

In terms of biological role, binds SECIS (Sec insertion sequence) elements present on selenocysteine (Sec) protein mRNAs, but does not promote Sec incorporation into selenoproteins in vitro. The sequence is that of Selenocysteine insertion sequence-binding protein 2-like (SECISBP2L) from Homo sapiens (Human).